Reading from the N-terminus, the 880-residue chain is Leucine--tRNA ligase (880 aa).

Positions 46–56 match the 'HIGH' region motif; it reads PYPSGALHMGH. Positions 638-642 match the 'KMSKS' region motif; that stretch reads KMSKS. ATP is bound at residue Lys641.

The protein belongs to the class-I aminoacyl-tRNA synthetase family.

It localises to the cytoplasm. It catalyses the reaction tRNA(Leu) + L-leucine + ATP = L-leucyl-tRNA(Leu) + AMP + diphosphate. This is Leucine--tRNA ligase from Stenotrophomonas maltophilia (strain R551-3).